Reading from the N-terminus, the 223-residue chain is Protein DEHYDRATION-INDUCED 19 homolog 3 (223 aa).

At T114 the chain carries Phosphothreonine. S116 carries the post-translational modification Phosphoserine.

The protein belongs to the Di19 family. In terms of processing, phosphorylated in vitro by CPK3 or CPK11. Expressed in seedlings, roots, leaves, stems, flowers and siliques.

The protein localises to the nucleus. The protein is Protein DEHYDRATION-INDUCED 19 homolog 3 (DI19-3) of Arabidopsis thaliana (Mouse-ear cress).